Consider the following 120-residue polypeptide: UPF0344 protein BCAH187_A1308 (120 aa).

The next 4 membrane-spanning stretches (helical) occupy residues 6–26 (ITAW…YSAG), 32–52 (VHMG…WLYL), 64–84 (WYGL…MVLV), and 91–111 (ATGA…YLGL).

The protein belongs to the UPF0344 family.

It localises to the cell membrane. The protein is UPF0344 protein BCAH187_A1308 of Bacillus cereus (strain AH187).